The chain runs to 495 residues: SH2 domain-containing adapter protein E (495 aa).

3 disordered regions span residues 51-190, 203-233, and 256-327; these read TVSE…DKGK, DYAD…EPYD, and LLDS…EYEQ. Ser-107 bears the Phosphoserine mark. Polar residues predominate over residues 135 to 144; sequence TKSSGCSTYI. Positions 148–157 are enriched in basic and acidic residues; it reads IKVDTQEKNG. A compositionally biased stretch (low complexity) spans 162–181; sequence PSSSSSSSSSSSSASSSPSS. Basic and acidic residues-rich tracts occupy residues 208-224 and 301-327; these read YDAK…RVGE and PRAE…EYEQ. The 96-residue stretch at 395 to 490 folds into the SH2 domain; that stretch reads WYHGAISRAE…AEHMTLLYPV (96 aa).

The chain is SH2 domain-containing adapter protein E (SHE) from Homo sapiens (Human).